The primary structure comprises 799 residues: MTDNKNHSLISDIKSQIKKFSEKALTLEVGNVISLGDGIVLVDGLDNVMLNEIVRFENGVEGMALNLEEDAVGVVLLGDYSNIKEGDRVYRTKRIVEVPVGDVMLGRVVDALGKAVDNKGNIVANKFSVIEKIAPGVMDRKSVHQPLETGILSIDAMFPIGKGQRELIIGDRQTGKTTIAIDAIINQKGRNVNCVYVAIGQKNSTIANVVRELEAHGAMEYTTVVTANASELPALQYIAPFTGVTIAEEWMHQGKDVLIVYDDLSKHAIAYRTLSLLLRRPPGREAYPGDVFYLHSRLLERACKLKDELGAGSITALPIIETQAGDISAYIPTNVISITDGQIFMMTSLFNAGQRPAIDAGQSVSRVGSAAQIKSVKQTGASLKLELANYRELEAFSQFGSDLDDETKRILKLGKAVMAVIKQAPNKPYNQTDEAIILFTVKEKLIPQVPVERIQDFKEYLLNYFKGTKLRADLEDKKAFDKENTPAFRCAIQKAINSFLNNSQDFKPCEEAEQTAFDKFFNENESIVVDGENDFNFINEEVSLKPTTETSEAVQIEEKVQDFVEPQEILETNKMEENHIFEEVEPEKIICEHHEFEIAENQEKIEGQQVLEDTNHEYSIYETVEQSGEVDNDESKDDDLEVLVPVAEIEHDEAILDERENRNWVFSDSAVSEVEKQTIMISISSNEAEQLFDNAKSVVFFKVTPKYPVEKVLVYVTSPVQKVVGEFDLLKIDVNSVNTSWNKYRSSSVISSRKEYLEYFNSHKEAHALLASKVYKYRKPKDLASFNMNKGPSGFTYLK.

Residues 1 to 549 form an ATP synthase alpha chain region; that stretch reads MTDNKNHSLI…EEVSLKPTTE (549 aa). 170-177 is an ATP binding site; sequence GDRQTGKT. Residues 550 to 799 form a unknown region; the sequence is TSEAVQIEEK…KGPSGFTYLK (250 aa).

Belongs to the ATPase alpha/beta chains family. As to quaternary structure, F-type ATPases have 2 components, CF(1) - the catalytic core - and CF(0) - the membrane proton channel. CF(1) has five subunits: alpha(3), beta(3), gamma(1), delta(1), epsilon(1). CF(0) has three main subunits: a(1), b(2) and c(9-12). The alpha and beta chains form an alternating ring which encloses part of the gamma chain. CF(1) is attached to CF(0) by a central stalk formed by the gamma and epsilon chains, while a peripheral stalk is formed by the delta and b chains.

The protein localises to the cell membrane. The enzyme catalyses ATP + H2O + 4 H(+)(in) = ADP + phosphate + 5 H(+)(out). Its function is as follows. Produces ATP from ADP in the presence of a proton gradient across the membrane. The alpha chain is a regulatory subunit. This chain is ATP synthase subunit alpha (atpA), found in Ureaplasma parvum serovar 3 (strain ATCC 27815 / 27 / NCTC 11736).